A 224-amino-acid polypeptide reads, in one-letter code: Large ribosomal subunit protein bL25 (224 aa).

The interval 190–224 is disordered; sequence EPAPAAEGAAPAEGAAAAAAGGKPAAKTAKPAAKK.

Belongs to the bacterial ribosomal protein bL25 family. CTC subfamily. Part of the 50S ribosomal subunit; part of the 5S rRNA/L5/L18/L25 subcomplex. Contacts the 5S rRNA. Binds to the 5S rRNA independently of L5 and L18.

Functionally, this is one of the proteins that binds to the 5S RNA in the ribosome where it forms part of the central protuberance. In Variovorax paradoxus (strain S110), this protein is Large ribosomal subunit protein bL25.